A 227-amino-acid chain; its full sequence is Cytochrome c oxidase subunit 2 (227 aa).

Topologically, residues M1–S14 are mitochondrial intermembrane. Residues P15–M45 traverse the membrane as a helical segment. Residues L46–Q59 are Mitochondrial matrix-facing. A helical membrane pass occupies residues E60–M87. Residues D88–L227 are Mitochondrial intermembrane-facing. The Cu cation site is built by H161, C196, E198, C200, H204, and M207. Residue E198 coordinates Mg(2+).

This sequence belongs to the cytochrome c oxidase subunit 2 family. Component of the cytochrome c oxidase (complex IV, CIV), a multisubunit enzyme composed of 14 subunits. The complex is composed of a catalytic core of 3 subunits MT-CO1, MT-CO2 and MT-CO3, encoded in the mitochondrial DNA, and 11 supernumerary subunits COX4I, COX5A, COX5B, COX6A, COX6B, COX6C, COX7A, COX7B, COX7C, COX8 and NDUFA4, which are encoded in the nuclear genome. The complex exists as a monomer or a dimer and forms supercomplexes (SCs) in the inner mitochondrial membrane with NADH-ubiquinone oxidoreductase (complex I, CI) and ubiquinol-cytochrome c oxidoreductase (cytochrome b-c1 complex, complex III, CIII), resulting in different assemblies (supercomplex SCI(1)III(2)IV(1) and megacomplex MCI(2)III(2)IV(2)). Found in a complex with TMEM177, COA6, COX18, COX20, SCO1 and SCO2. Interacts with TMEM177 in a COX20-dependent manner. Interacts with COX20. Interacts with COX16. Cu cation serves as cofactor.

The protein resides in the mitochondrion inner membrane. The catalysed reaction is 4 Fe(II)-[cytochrome c] + O2 + 8 H(+)(in) = 4 Fe(III)-[cytochrome c] + 2 H2O + 4 H(+)(out). Component of the cytochrome c oxidase, the last enzyme in the mitochondrial electron transport chain which drives oxidative phosphorylation. The respiratory chain contains 3 multisubunit complexes succinate dehydrogenase (complex II, CII), ubiquinol-cytochrome c oxidoreductase (cytochrome b-c1 complex, complex III, CIII) and cytochrome c oxidase (complex IV, CIV), that cooperate to transfer electrons derived from NADH and succinate to molecular oxygen, creating an electrochemical gradient over the inner membrane that drives transmembrane transport and the ATP synthase. Cytochrome c oxidase is the component of the respiratory chain that catalyzes the reduction of oxygen to water. Electrons originating from reduced cytochrome c in the intermembrane space (IMS) are transferred via the dinuclear copper A center (CU(A)) of subunit 2 and heme A of subunit 1 to the active site in subunit 1, a binuclear center (BNC) formed by heme A3 and copper B (CU(B)). The BNC reduces molecular oxygen to 2 water molecules using 4 electrons from cytochrome c in the IMS and 4 protons from the mitochondrial matrix. This chain is Cytochrome c oxidase subunit 2 (MT-CO2), found in Rhinoceros unicornis (Greater Indian rhinoceros).